We begin with the raw amino-acid sequence, 92 residues long: Late cornified envelope protein 3E (92 aa).

Positions 1–10 (MSCQQNQKQC) are enriched in low complexity. Disordered regions lie at residues 1–22 (MSCQ…PKCP) and 64–92 (RRQR…GGCC). A compositionally biased stretch (pro residues) spans 11–22 (QPPPKCPSPKCP). Residues 76-92 (GQQGGGSGCCHGSGGCC) are compositionally biased toward gly residues.

Belongs to the LCE family. In terms of assembly, interacts with CYSRT1. In terms of tissue distribution, skin-specific. Expression was readily detected in adult trunk skin, adult arm skin, fetal skin, penal skin, vulva, esophagus and tongue. Not expressed in the cervix, rectum, lung, colon, or placenta.

In terms of biological role, precursors of the cornified envelope of the stratum corneum. In Homo sapiens (Human), this protein is Late cornified envelope protein 3E (LCE3E).